The primary structure comprises 938 residues: Cyclin-dependent kinase-like 5 (938 aa).

The region spanning 13 to 297 (FEILGVVGEG…TEQCLNHPTF (285 aa)) is the Protein kinase domain. Residues 19–27 (VGEGAYGVV) and lysine 42 contribute to the ATP site. Residue aspartate 135 is the Proton acceptor of the active site. 4 disordered regions span residues 298–348 (QTQR…DIQN), 382–566 (KTYQ…RHSK), 646–865 (SPQP…LTAQ), and 877–938 (HPLS…KWKQ). Composition is skewed to polar residues over residues 319–331 (ESST…QSTK) and 382–402 (KTYQ…NNNI). Serine 407 is modified (phosphoserine). Basic and acidic residues predominate over residues 407–417 (SPKEAKSKTEF). Polar residues-rich tracts occupy residues 434–462 (LKSS…QPSE), 473–482 (IPQSSRSPSY), and 494–548 (DSKS…SGRN). At serine 479 the chain carries Phosphoserine. Basic and acidic residues-rich tracts occupy residues 549–559 (NRNEGTLDSRR) and 679–704 (QKSE…RHLY). Serine 720 carries the post-translational modification Phosphoserine. A compositionally biased stretch (polar residues) spans 728 to 748 (HENNVSTRVSSLPSDSSSGTN). A Phosphoserine modification is found at serine 761. Basic and acidic residues-rich tracts occupy residues 769-778 (DQLKEKEKQG) and 817-827 (RPKEWRPEKLS). The segment covering 880-891 (SQATGGSSNIRQ) has biased composition (polar residues).

It belongs to the protein kinase superfamily. CMGC Ser/Thr protein kinase family. CDC2/CDKX subfamily. As to quaternary structure, interacts with MECP2. Post-translationally, autophosphorylated.

The protein resides in the nucleus. Its subcellular location is the cytoplasm. It localises to the cytoskeleton. It is found in the cilium basal body. The protein localises to the microtubule organizing center. The protein resides in the centrosome. It carries out the reaction L-seryl-[protein] + ATP = O-phospho-L-seryl-[protein] + ADP + H(+). The catalysed reaction is L-threonyl-[protein] + ATP = O-phospho-L-threonyl-[protein] + ADP + H(+). Its function is as follows. Mediates phosphorylation of MECP2. May regulate ciliogenesis. This Mus musculus (Mouse) protein is Cyclin-dependent kinase-like 5.